A 390-amino-acid chain; its full sequence is MTILSPKDVVIVDGVRSAMGKTKNGMFRHVRADSMSAELVRALVERNDFDPRDVEDIIWGCVNQTLEQGLNIGRNIGLLAGIPKTAGGQTVNRLCGSSMQALHTAAAQIMTGQGDVFIIGGVEHMGHVGMMHGIDLNPEASKHYAKASNMMGLTAEMLGRMNNITREEQDAFGLESHRRAWAATTEGRFDNEIIGIEGHDAAGRLQLCTVDEVIRPDATMEQMQKLRPAFDPVSGTVTAATSSALSDGASAMLIMSAQKAKELGLKPRARIRSMAVAGCDAAIMGYGPVPATQKALKRAGMSIEDMQTIELNEAFAAQGLSVLKALNLTDKQDIVNINGGAIALGHPLGCSGARITVTLLNAMEQSDTEIGLATMCIGLGQGISTIIERV.

C95 (acyl-thioester intermediate) is an active-site residue. Catalysis depends on proton acceptor residues H346 and C376.

The protein belongs to the thiolase-like superfamily. Thiolase family. As to quaternary structure, heterotetramer of two alpha chains (FadB) and two beta chains (FadA).

It is found in the cytoplasm. The catalysed reaction is an acyl-CoA + acetyl-CoA = a 3-oxoacyl-CoA + CoA. The protein operates within lipid metabolism; fatty acid beta-oxidation. Its function is as follows. Catalyzes the final step of fatty acid oxidation in which acetyl-CoA is released and the CoA ester of a fatty acid two carbons shorter is formed. This is 3-ketoacyl-CoA thiolase from Psychrobacter arcticus (strain DSM 17307 / VKM B-2377 / 273-4).